The sequence spans 133 residues: Small ribosomal subunit protein uS15 (133 aa).

This sequence belongs to the universal ribosomal protein uS15 family. In terms of assembly, part of the 30S ribosomal subunit.

In Methanosphaera stadtmanae (strain ATCC 43021 / DSM 3091 / JCM 11832 / MCB-3), this protein is Small ribosomal subunit protein uS15.